A 4146-amino-acid polypeptide reads, in one-letter code: DNA-dependent protein kinase catalytic subunit (4146 aa).

4 HEAT repeats span residues 308 to 343 (DDYQSLFEVISKWCGHTNGEMKKLAFAALDSFLKQI), 925 to 962 (VIYLDMFLPHITELALSTSDRQTKVAACELLHSIVAFM), 1026 to 1062 (QDTVALLEAILTGIVDPVDSTLRDFCGQCIQEFLRWS), and 1075 to 1111 (PVNTTSLFKRLYSLALHPNAFKRLGAALAFNNIYRDF). 2 TPR repeats span residues 1745 to 1778 (PMKSDEFPKGTLKFNNYVDCIKKFLDALELSQSP) and 1974 to 2007 (VFSELKFYQGFLFTEKKEKNLLIFENLIDLQRNY). The residue at position 2075 (Ser-2075) is a Phosphoserine; by autocatalysis. Thr-2631 carries the post-translational modification Phosphothreonine; by autocatalysis. Ser-2634 bears the Phosphoserine; by autocatalysis mark. Residues Thr-2659 and Thr-2668 each carry the phosphothreonine; by autocatalysis modification. The 684-residue stretch at 2873–3556 (FIACVQDMCY…VYPFMVSGES (684 aa)) folds into the FAT domain. In terms of domain architecture, PI3K/PI4K catalytic spans 3739–4071 (FDERVSVMAS…IHCAKRKLDG (333 aa)). The segment at 3745–3751 (VMASIRK) is G-loop. The catalytic loop stretch occupies residues 3937–3945 (GIGDRHLSN). The interval 3957-3982 (GIDFGHAFGTATQFLPVPELMPFRLT) is activation loop. One can recognise an FATC domain in the interval 4114–4146 (DGLTEETQVQCLIDQATDPNILGRVWKGWEPWI).

The protein belongs to the PI3/PI4-kinase family. As to quaternary structure, DNA-PK is a heterotrimer of prkdc and the Ku dimer (composed of xrcc6/Ku70 and xrcc5/Ku86). Component of the core long-range non-homologous end joining (NHEJ) complex (also named DNA-PK complex) composed of prkdc, lig4, xrcc4, xrcc6/ku70, xrcc5/ku86 and nhej1/xlf. Additional component of the NHEJ complex includes paxx. Following autophosphorylation, prkdc dissociates from DNA. Post-translationally, autophosphorylated at two clusters, the T2609 cluster and the S2056 cluster. Autophosphorylated on Ser-2075, Thr-2631, Thr-2659 and Thr-2668. Ser-2075 and Thr-2668 are DNA damage-inducible phosphorylation sites (inducible with ionizing radiation, IR) dephosphorylated by PPP5C. Autophosphorylation induces a conformational change that leads to remodeling of the DNA-PK complex, requisite for efficient end processing and DNA repair. Autophosphorylation in trans within DNA-PK complexes loaded on DNA ends leads to the dissociation of PRKDC from DNA and the transition into the short-range NHEJ complex. Autophosphorylation of the T2609 cluster is required for hematopoietic development and protein synthesis in erythrocytes precursors.

The protein resides in the nucleus. It localises to the nucleolus. It catalyses the reaction L-seryl-[protein] + ATP = O-phospho-L-seryl-[protein] + ADP + H(+). The enzyme catalyses L-threonyl-[protein] + ATP = O-phospho-L-threonyl-[protein] + ADP + H(+). Functionally, serine/threonine-protein kinase that acts as a molecular sensor for DNA damage. Involved in DNA nonhomologous end joining (NHEJ) required for double-strand break (DSB) repair and V(D)J recombination. Must be bound to DNA to express its catalytic properties. Promotes processing of hairpin DNA structures in V(D)J recombination by activation of the hairpin endonuclease artemis (DCLRE1C). Recruited by XRCC5 and XRCC6 to DNA ends and is required to (1) protect and align broken ends of DNA, thereby preventing their degradation, (2) and sequester the DSB for repair by NHEJ. Acts as a scaffold protein to aid the localization of DNA repair proteins to the site of damage. The assembly of the DNA-PK complex at DNA ends is also required for the NHEJ ligation step. Found at the ends of chromosomes, suggesting a further role in the maintenance of telomeric stability and the prevention of chromosomal end fusion. As part of the DNA-PK complex, involved in the early steps of ribosome assembly by promoting the processing of precursor rRNA into mature 18S rRNA in the small-subunit processome. Recognizes the substrate consensus sequence [ST]-Q. Phosphorylates 'Ser-139' of histone variant H2AX, thereby regulating DNA damage response mechanism. This is DNA-dependent protein kinase catalytic subunit (prkdc) from Xenopus laevis (African clawed frog).